The primary structure comprises 317 residues: Ribosomal protein L11 methyltransferase (317 aa).

Thr158, Gly179, Asp201, and Asn244 together coordinate S-adenosyl-L-methionine.

Belongs to the methyltransferase superfamily. PrmA family.

Its subcellular location is the cytoplasm. It carries out the reaction L-lysyl-[protein] + 3 S-adenosyl-L-methionine = N(6),N(6),N(6)-trimethyl-L-lysyl-[protein] + 3 S-adenosyl-L-homocysteine + 3 H(+). Methylates ribosomal protein L11. This is Ribosomal protein L11 methyltransferase from Streptococcus mutans serotype c (strain ATCC 700610 / UA159).